A 459-amino-acid chain; its full sequence is Glycosyl hydrolase family 109 protein 1 (459 aa).

The tat-type signal signal peptide spans 1 to 31 (MHNIHRRHFLKAAGAVTAGLVTANIALNANA). Residues 64 to 65 (ER), Asp86, 135 to 138 (WEWH), 155 to 156 (EV), and Asn184 contribute to the NAD(+) site. Substrate contacts are provided by residues Tyr213, Arg232, 244-247 (YPTH), and Tyr326. Tyr244 provides a ligand contact to NAD(+).

Belongs to the Gfo/Idh/MocA family. Glycosyl hydrolase 109 subfamily. It depends on NAD(+) as a cofactor. In terms of processing, predicted to be exported by the Tat system. The position of the signal peptide cleavage has not been experimentally proven.

Glycosidase. The chain is Glycosyl hydrolase family 109 protein 1 from Shewanella sp. (strain MR-7).